The chain runs to 360 residues: Peptide chain release factor 1 (360 aa).

N5-methylglutamine is present on Q235. The segment at 285 to 313 is disordered; sequence KRQQAEASTRRNLLGSGDRSDRNRTYNFP.

Belongs to the prokaryotic/mitochondrial release factor family. In terms of processing, methylated by PrmC. Methylation increases the termination efficiency of RF1.

Its subcellular location is the cytoplasm. Peptide chain release factor 1 directs the termination of translation in response to the peptide chain termination codons UAG and UAA. This chain is Peptide chain release factor 1, found in Salmonella paratyphi A (strain ATCC 9150 / SARB42).